Here is a 445-residue protein sequence, read N- to C-terminus: Response regulator protein PilR (445 aa).

In terms of domain architecture, Response regulatory spans 5–119 (KALIVDDEPD…RLRELVATAL (115 aa)). 4-aspartylphosphate is present on residues aspartate 11 and aspartate 54. The Sigma-54 factor interaction domain maps to 135–364 (LLGESPPMRA…LENMLERAYT (230 aa)). ATP-binding positions include 163-170 (GESGSGKE) and 226-235 (ASGGTLFLDE). Residues 418–437 (RWNRTAAAQRLGLTFRSMRY) constitute a DNA-binding region (H-T-H motif).

In terms of processing, phosphorylated by PilS.

The protein resides in the cytoplasm. Functionally, member of the two-component regulatory system PilS/PilR that regulates the expression of multiple genes including the type IV pilus (T4P) major subunit PilA. Thereby, plays a major role in the regulation of multiple motility pathways. Upon appropriate environmental signals, the histidine kinase PilS transfers the phosphoryl group onto PilR. In turn, PilR functions as a transcriptional activator by direct binding to a cis-acting sequence upstream of the pilin gene promoter leading to its activation. The protein is Response regulator protein PilR (pilR) of Pseudomonas aeruginosa (strain ATCC 15692 / DSM 22644 / CIP 104116 / JCM 14847 / LMG 12228 / 1C / PRS 101 / PAO1).